Consider the following 449-residue polypeptide: Na(+)-translocating NADH-quinone reductase subunit A (449 aa).

Belongs to the NqrA family. In terms of assembly, composed of six subunits; NqrA, NqrB, NqrC, NqrD, NqrE and NqrF.

It catalyses the reaction a ubiquinone + n Na(+)(in) + NADH + H(+) = a ubiquinol + n Na(+)(out) + NAD(+). Its function is as follows. NQR complex catalyzes the reduction of ubiquinone-1 to ubiquinol by two successive reactions, coupled with the transport of Na(+) ions from the cytoplasm to the periplasm. NqrA to NqrE are probably involved in the second step, the conversion of ubisemiquinone to ubiquinol. This chain is Na(+)-translocating NADH-quinone reductase subunit A, found in Actinobacillus pleuropneumoniae serotype 3 (strain JL03).